A 236-amino-acid chain; its full sequence is Sorulation-regulated protein 2 (236 aa).

The N-terminal stretch at 1-20 is a signal peptide; that stretch reads MLGLYLSSLFFAFFMAQVFA. Residues Asn-155, Asn-160, Asn-203, and Asn-212 are each glycosylated (N-linked (GlcNAc...) asparagine). The GPI-anchor amidated asparagine moiety is linked to residue Asn-212. The propeptide at 213–236 is removed in mature form; the sequence is SSSSLMPSMGILSFLFGLYLLLHP.

The GPI-anchor is attached to the protein in the endoplasmic reticulum and serves to target the protein to the cell surface. There, the glucosamine-inositol phospholipid moiety is cleaved off and the GPI-modified mannoprotein is covalently attached via its lipidless GPI glycan remnant to the 1,6-beta-glucan of the outer cell wall layer. Post-translationally, N-glycosylated.

The protein resides in the spore wall. Its subcellular location is the secreted. It localises to the cell wall. The protein localises to the membrane. The sequence is that of Sorulation-regulated protein 2 from Saccharomyces cerevisiae (strain ATCC 204508 / S288c) (Baker's yeast).